The following is a 1232-amino-acid chain: DNA-directed RNA polymerase subunit beta (1232 aa).

The disordered stretch occupies residues 1170-1232; sequence SVDEDADELE…LDLDDFGDEH (63 aa). A compositionally biased stretch (acidic residues) spans 1171 to 1180; it reads VDEDADELEV. Over residues 1189-1198 the composition is skewed to basic and acidic residues; that stretch reads PEEKEEKEKE. Residues 1199–1232 show a composition bias toward acidic residues; it reads DSDEYDDLREEDVEPDLEELSLDDLDLDDFGDEH.

The protein belongs to the RNA polymerase beta chain family. In terms of assembly, the RNAP catalytic core consists of 2 alpha, 1 beta, 1 beta' and 1 omega subunit. When a sigma factor is associated with the core the holoenzyme is formed, which can initiate transcription.

It catalyses the reaction RNA(n) + a ribonucleoside 5'-triphosphate = RNA(n+1) + diphosphate. DNA-dependent RNA polymerase catalyzes the transcription of DNA into RNA using the four ribonucleoside triphosphates as substrates. This is DNA-directed RNA polymerase subunit beta from Clostridium botulinum (strain Okra / Type B1).